Reading from the N-terminus, the 279-residue chain is Acetyl-coenzyme A carboxylase carboxyl transferase subunit beta (279 aa).

Residues Leu-23 to Ser-279 enclose the CoA carboxyltransferase N-terminal domain. Zn(2+) contacts are provided by Cys-27, Cys-30, Cys-46, and Cys-49. The C4-type zinc-finger motif lies at Cys-27 to Cys-49.

This sequence belongs to the AccD/PCCB family. Acetyl-CoA carboxylase is a heterohexamer composed of biotin carboxyl carrier protein (AccB), biotin carboxylase (AccC) and two subunits each of ACCase subunit alpha (AccA) and ACCase subunit beta (AccD). Requires Zn(2+) as cofactor.

The protein localises to the cytoplasm. It carries out the reaction N(6)-carboxybiotinyl-L-lysyl-[protein] + acetyl-CoA = N(6)-biotinyl-L-lysyl-[protein] + malonyl-CoA. It participates in lipid metabolism; malonyl-CoA biosynthesis; malonyl-CoA from acetyl-CoA: step 1/1. Component of the acetyl coenzyme A carboxylase (ACC) complex. Biotin carboxylase (BC) catalyzes the carboxylation of biotin on its carrier protein (BCCP) and then the CO(2) group is transferred by the transcarboxylase to acetyl-CoA to form malonyl-CoA. The polypeptide is Acetyl-coenzyme A carboxylase carboxyl transferase subunit beta (Prosthecochloris aestuarii (strain DSM 271 / SK 413)).